Reading from the N-terminus, the 86-residue chain is Small ribosomal subunit protein uS15 (86 aa).

Residues 1-22 (MSVDTQKVIEDNKRSAQDTGSP) form a disordered region. A compositionally biased stretch (basic and acidic residues) spans 7–16 (KVIEDNKRSA).

Belongs to the universal ribosomal protein uS15 family. In terms of assembly, part of the 30S ribosomal subunit. Forms a bridge to the 50S subunit in the 70S ribosome, contacting the 23S rRNA.

In terms of biological role, one of the primary rRNA binding proteins, it binds directly to 16S rRNA where it helps nucleate assembly of the platform of the 30S subunit by binding and bridging several RNA helices of the 16S rRNA. Functionally, forms an intersubunit bridge (bridge B4) with the 23S rRNA of the 50S subunit in the ribosome. The polypeptide is Small ribosomal subunit protein uS15 (Xanthomonas axonopodis pv. citri (strain 306)).